The following is a 397-amino-acid chain: ORC1-type DNA replication protein 8 (397 aa).

Residues 61–65 (VGKTA), Tyr211, and Arg223 each bind ATP.

Belongs to the CDC6/cdc18 family.

Its function is as follows. Involved in regulation of DNA replication. This Halobacterium salinarum (strain ATCC 700922 / JCM 11081 / NRC-1) (Halobacterium halobium) protein is ORC1-type DNA replication protein 8 (orc8).